A 167-amino-acid chain; its full sequence is UPF0336 protein MAP_4109 (167 aa).

In terms of domain architecture, MaoC-like spans 21 to 124 (GREQLRQFAL…RFGADIVVTK (104 aa)).

It belongs to the UPF0336 family.

The chain is UPF0336 protein MAP_4109 from Mycolicibacterium paratuberculosis (strain ATCC BAA-968 / K-10) (Mycobacterium paratuberculosis).